The sequence spans 243 residues: UPF0246 protein MGAS10750_Spy1880 (243 aa).

Belongs to the UPF0246 family.

In Streptococcus pyogenes serotype M4 (strain MGAS10750), this protein is UPF0246 protein MGAS10750_Spy1880.